Reading from the N-terminus, the 271-residue chain is 5-deoxy-glucuronate isomerase (271 aa).

This sequence belongs to the isomerase IolB family.

It catalyses the reaction 5-deoxy-D-glucuronate = 5-dehydro-2-deoxy-D-gluconate. The protein operates within polyol metabolism; myo-inositol degradation into acetyl-CoA; acetyl-CoA from myo-inositol: step 4/7. Its function is as follows. Involved in the isomerization of 5-deoxy-glucuronate (5DG) to 5-dehydro-2-deoxy-D-gluconate (DKG or 2-deoxy-5-keto-D-gluconate). The protein is 5-deoxy-glucuronate isomerase of Bacillus licheniformis (strain ATCC 14580 / DSM 13 / JCM 2505 / CCUG 7422 / NBRC 12200 / NCIMB 9375 / NCTC 10341 / NRRL NRS-1264 / Gibson 46).